The chain runs to 239 residues: Protein G1-like8 (239 aa).

Disordered stretches follow at residues 1–35 and 149–239; these read MEGG…RYES and KARG…ATRV. Residues 9 to 29 show a composition bias toward low complexity; it reads DAQAQAQPVAQAPPAMQPMQQ. The region spanning 32–159 is the ALOG domain; sequence RYESQKRRDW…ARGIPYEKKK (128 aa). Residues 157-161 carry the Nuclear localization signal motif; that stretch reads KKKRK. The segment covering 167-178 has biased composition (pro residues); the sequence is QPPPQPPLPPQH. Low complexity-rich tracts occupy residues 179–215 and 223–239; these read QPGA…ATSQ and TTTT…ATRV.

It belongs to the plant homeotic and developmental regulators ALOG protein family.

Its subcellular location is the nucleus. In terms of biological role, probable transcription regulator that acts as a developmental regulator by promoting cell growth in response to light. In Oryza sativa subsp. indica (Rice), this protein is Protein G1-like8.